Consider the following 154-residue polypeptide: NADPH-dependent 7-cyano-7-deazaguanine reductase (154 aa).

Cysteine 54 acts as the Thioimide intermediate in catalysis. The Proton donor role is filled by aspartate 61. Substrate contacts are provided by residues 76–78 (VES) and 95–96 (HE).

The protein belongs to the GTP cyclohydrolase I family. QueF type 1 subfamily.

It localises to the cytoplasm. The enzyme catalyses 7-aminomethyl-7-carbaguanine + 2 NADP(+) = 7-cyano-7-deazaguanine + 2 NADPH + 3 H(+). It participates in tRNA modification; tRNA-queuosine biosynthesis. Its function is as follows. Catalyzes the NADPH-dependent reduction of 7-cyano-7-deazaguanine (preQ0) to 7-aminomethyl-7-deazaguanine (preQ1). The polypeptide is NADPH-dependent 7-cyano-7-deazaguanine reductase (Porphyromonas gingivalis (strain ATCC 33277 / DSM 20709 / CIP 103683 / JCM 12257 / NCTC 11834 / 2561)).